Consider the following 161-residue polypeptide: ATP synthase subunit b 1 (161 aa).

A helical membrane pass occupies residues 3–23 (LDATFYALVGLILFFVLIAYL).

This sequence belongs to the ATPase B chain family. F-type ATPases have 2 components, F(1) - the catalytic core - and F(0) - the membrane proton channel. F(1) has five subunits: alpha(3), beta(3), gamma(1), delta(1), epsilon(1). F(0) has three main subunits: a(1), b(2) and c(10-14). The alpha and beta chains form an alternating ring which encloses part of the gamma chain. F(1) is attached to F(0) by a central stalk formed by the gamma and epsilon chains, while a peripheral stalk is formed by the delta and b chains.

Its subcellular location is the cell inner membrane. F(1)F(0) ATP synthase produces ATP from ADP in the presence of a proton or sodium gradient. F-type ATPases consist of two structural domains, F(1) containing the extramembraneous catalytic core and F(0) containing the membrane proton channel, linked together by a central stalk and a peripheral stalk. During catalysis, ATP synthesis in the catalytic domain of F(1) is coupled via a rotary mechanism of the central stalk subunits to proton translocation. Functionally, component of the F(0) channel, it forms part of the peripheral stalk, linking F(1) to F(0). In Rhizobium meliloti (strain 1021) (Ensifer meliloti), this protein is ATP synthase subunit b 1.